Here is a 26-residue protein sequence, read N- to C-terminus: Conotoxin Eb6.15 (26 aa).

2 disulfides stabilise this stretch: C7-C18 and C13-C25.

Belongs to the conotoxin O1 superfamily. In terms of tissue distribution, expressed by the venom duct.

The protein localises to the secreted. This chain is Conotoxin Eb6.15 (E1), found in Conus ebraeus (Hebrew cone).